Consider the following 570-residue polypeptide: 4-coumarate--CoA ligase 4 (570 aa).

S218, S219, G220, T221, T222, and K226 together coordinate ATP. Residue Y268 coordinates (E)-4-coumaroyl-AMP. CoA is bound at residue R289. The segment at 291-360 is SBD1; sequence ELNLVMELIQ…LKFPNAIFGQ (70 aa). Residues A338, Q360, G361, and T365 each coordinate (E)-4-coumaroyl-AMP. ATP-binding residues include Q360, G361, T365, D448, and R463. An SBD2 region spans residues 361–427; the sequence is GYGMTESGTV…VRGHQLMKGY (67 aa). K465 and K469 together coordinate (E)-4-coumaroyl-AMP. 2 residues coordinate CoA: K471 and G472. K554 serves as a coordination point for ATP.

It belongs to the ATP-dependent AMP-binding enzyme family. Mg(2+) is required as a cofactor.

The catalysed reaction is (E)-sinapate + ATP + CoA = (E)-sinapoyl-CoA + AMP + diphosphate. It carries out the reaction (E)-4-coumarate + ATP + CoA = (E)-4-coumaroyl-CoA + AMP + diphosphate. It catalyses the reaction (E)-caffeate + ATP + CoA = (E)-caffeoyl-CoA + AMP + diphosphate. The enzyme catalyses (E)-ferulate + ATP + CoA = (E)-feruloyl-CoA + AMP + diphosphate. The catalysed reaction is (E)-sinapate + ATP + H(+) = (E)-sinapoyl-AMP + diphosphate. It carries out the reaction (E)-sinapoyl-AMP + CoA = (E)-sinapoyl-CoA + AMP + H(+). It catalyses the reaction (E)-4-coumarate + ATP + H(+) = (E)-4-coumaroyl-AMP + diphosphate. The enzyme catalyses (E)-4-coumaroyl-AMP + CoA = (E)-4-coumaroyl-CoA + AMP + H(+). The catalysed reaction is (E)-caffeate + ATP + H(+) = (E)-caffeoyl-AMP + diphosphate. It carries out the reaction (E)-caffeoyl-AMP + CoA = (E)-caffeoyl-CoA + AMP + H(+). It catalyses the reaction (E)-ferulate + ATP + H(+) = (E)-feruloyl-AMP + diphosphate. The enzyme catalyses (E)-feruloyl-AMP + CoA = (E)-feruloyl-CoA + AMP + H(+). It functions in the pathway phytoalexin biosynthesis; 3,4',5-trihydroxystilbene biosynthesis; 3,4',5-trihydroxystilbene from trans-4-coumarate: step 1/2. Produces CoA thioesters of a variety of hydroxy- and methoxy-substituted cinnamic acids, which are used to synthesize several phenylpropanoid-derived compounds, including anthocyanins, flavonoids, isoflavonoids, coumarins, lignin, suberin and wall-bound phenolics. Follows a two-step reaction mechanism, wherein the carboxylate substrate first undergoes adenylation by ATP, followed by a thioesterification in the presence of CoA to yield the final CoA thioesters. This is 4-coumarate--CoA ligase 4 from Arabidopsis thaliana (Mouse-ear cress).